The sequence spans 286 residues: Aminoglycoside N(3)-acetyltransferase III (286 aa).

The protein belongs to the antibiotic N-acetyltransferase family.

The catalysed reaction is a 2-deoxystreptamine antibiotic + acetyl-CoA = an N(3)-acetyl-2-deoxystreptamine antibiotic + CoA + H(+). Resistance to antibiotics containing the 2-deoxy-streptamine ring including gentamicin, kanamycin, tobramycin, neomycin and apramycin. The chain is Aminoglycoside N(3)-acetyltransferase III (aacC3) from Salmonella sp.